Here is a 134-residue protein sequence, read N- to C-terminus: D-ribose pyranase (134 aa).

The Proton donor role is filled by His20. Substrate contacts are provided by residues Asp28, His101, and 123 to 125 (YCN).

It belongs to the RbsD / FucU family. RbsD subfamily. Homodecamer.

It localises to the cytoplasm. It catalyses the reaction beta-D-ribopyranose = beta-D-ribofuranose. The protein operates within carbohydrate metabolism; D-ribose degradation; D-ribose 5-phosphate from beta-D-ribopyranose: step 1/2. Its function is as follows. Catalyzes the interconversion of beta-pyran and beta-furan forms of D-ribose. The polypeptide is D-ribose pyranase (Pseudomonas fluorescens (strain ATCC BAA-477 / NRRL B-23932 / Pf-5)).